Here is a 256-residue protein sequence, read N- to C-terminus: Imidazole glycerol phosphate synthase subunit HisF (256 aa).

Residues D13 and D132 contribute to the active site.

This sequence belongs to the HisA/HisF family. In terms of assembly, heterodimer of HisH and HisF.

The protein resides in the cytoplasm. The catalysed reaction is 5-[(5-phospho-1-deoxy-D-ribulos-1-ylimino)methylamino]-1-(5-phospho-beta-D-ribosyl)imidazole-4-carboxamide + L-glutamine = D-erythro-1-(imidazol-4-yl)glycerol 3-phosphate + 5-amino-1-(5-phospho-beta-D-ribosyl)imidazole-4-carboxamide + L-glutamate + H(+). It participates in amino-acid biosynthesis; L-histidine biosynthesis; L-histidine from 5-phospho-alpha-D-ribose 1-diphosphate: step 5/9. Functionally, IGPS catalyzes the conversion of PRFAR and glutamine to IGP, AICAR and glutamate. The HisF subunit catalyzes the cyclization activity that produces IGP and AICAR from PRFAR using the ammonia provided by the HisH subunit. The sequence is that of Imidazole glycerol phosphate synthase subunit HisF from Leptospira interrogans serogroup Icterohaemorrhagiae serovar copenhageni (strain Fiocruz L1-130).